The primary structure comprises 398 residues: MYVDPMNNNEIRKLSITAKTETTPDNVGQDIPVNAHSVHEECSSNTPVEINGRNSGKLKEEASAGICLVKKPMLQYRDTSGKYSLSDFQILRTLGTGSFGRVHLIRSNHNGRFYALKTLKKHTIVKLKQVEHTNDERRMLSIVSHPFIIRMWGTFQDSQQVFMVMDYIEGGELFSLLRKSQRFPNPVAKFYAAEVCLALEYLHSKDIIYRDLKPENILLDKNGHIKITDFGFAKYVPDVTYTLCGTPDYIAPEVVSTKPYNKSVDWWSFGVLIYEMLAGYTPFYNSNTMKTYENILNAELKFPPFFHPDAQDLLKKLITRDLSERLGNLQNGSEDVKNHPWFNEVIWEKLLARYIETPYEPPIQQGQGDTSQFDRYPEEEFNYGIQGEDPYMDLMKEF.

Residues Ser15 and Ser55 each carry the phosphoserine modification. The region spanning 88–342 (FQILRTLGTG…SEDVKNHPWF (255 aa)) is the Protein kinase domain. ATP contacts are provided by residues 94-102 (LGTGSFGRV) and Lys117. Asp211 (proton acceptor) is an active-site residue. An AGC-kinase C-terminal domain is found at 343-398 (NEVIWEKLLARYIETPYEPPIQQGQGDTSQFDRYPEEEFNYGIQGEDPYMDLMKEF).

The protein belongs to the protein kinase superfamily. AGC Ser/Thr protein kinase family. cAMP subfamily.

It carries out the reaction L-seryl-[protein] + ATP = O-phospho-L-seryl-[protein] + ADP + H(+). It catalyses the reaction L-threonyl-[protein] + ATP = O-phospho-L-threonyl-[protein] + ADP + H(+). Its activity is regulated as follows. Activated by cAMP. This is cAMP-dependent protein kinase type 3 (TPK3) from Saccharomyces cerevisiae (strain ATCC 204508 / S288c) (Baker's yeast).